A 1020-amino-acid polypeptide reads, in one-letter code: Neurofilament heavy polypeptide (1020 aa).

The segment at M1–Q100 is head. The segment at V58–G83 is disordered. Residues A71–N82 are compositionally biased toward polar residues. A phosphoserine mark is found at S76 and S124. Residues E97–I413 enclose the IF rod domain. Positions L101–L132 are coil 1A. Positions R133–L145 are linker 1. The segment at Y146–Q244 is coil 1B. Residues I245–D266 are linker 12. The interval V267–Q288 is coil 2A. The linker 2 stretch occupies residues S289–W292. The segment at F293–I413 is coil 2B. S347 and S421 each carry phosphoserine. The tract at residues G414 to K1020 is tail. A disordered region spans residues I456–K1020. Acidic residues-rich tracts occupy residues E459 to E475 and G483 to E498. Phosphoserine is present on residues S511, S526, S532, S540, S546, S552, S560, S566, S574, S580, S586, S594, S600, S606, S614, S620, S628, S634, S640, S648, S654, S662, S668, S676, S682, S690, S696, and S704. A compositionally biased stretch (basic and acidic residues) spans S511–K1020. 4 repeat units span residues K525–A530, K531–E536, K539–V544, and K545–A550. The segment at K525–E826 is 30 X 6 AA repeats of K-S-P-[AEPV]-[EAK]-[AEVK]. Copy 5 of the repeat occupies K559–A564. 2 consecutive repeat copies span residues K573 to V578 and K579 to A584. Repeat copies occupy residues K593–A598 and K599–A604. Repeat unit 10 spans residues K613–A618. 4 consecutive repeat copies span residues K627–V632, K633–A638, K639–E644, and K647–A652. 12 repeat units span residues K661–A666, K667–A672, K675–A680, K681–A686, K689–A694, K695–E700, K703–A708, K709–E714, K717–A722, K723–E728, K737–E742, and K745–A750. Phosphoserine is present on residues S718, S724, and S738. 2 positions are modified to phosphoserine: S752 and S763. Repeat unit 27 spans residues K762–K767. Position 768 is a phosphothreonine (T768). 3 repeat units span residues K786–E791, K794–A799, and K821–E826. S787, S795, S822, and S888 each carry phosphoserine.

The protein belongs to the intermediate filament family. Forms heterodimers with NEFL; which can further hetero-oligomerize (in vitro). Forms heterodimers with INA (in vitro). There are a number of repeats of the tripeptide K-S-P, NFH is phosphorylated on a number of the serines in this motif. It is thought that phosphorylation of NFH results in the formation of interfilament cross bridges that are important in the maintenance of axonal caliber. In terms of processing, phosphorylation seems to play a major role in the functioning of the larger neurofilament polypeptides (NF-M and NF-H), the levels of phosphorylation being altered developmentally and coincidentally with a change in the neurofilament function. Post-translationally, phosphorylated in the head and rod regions by the PKC kinase PKN1, leading to the inhibition of polymerization.

The protein resides in the cytoplasm. The protein localises to the cytoskeleton. Its subcellular location is the cell projection. It is found in the axon. Neurofilaments usually contain three intermediate filament proteins: NEFL, NEFM, and NEFH which are involved in the maintenance of neuronal caliber. NEFH has an important function in mature axons that is not subserved by the two smaller NF proteins. May additionally cooperate with the neuronal intermediate filament proteins PRPH and INA to form neuronal filamentous networks. This Homo sapiens (Human) protein is Neurofilament heavy polypeptide (NEFH).